The sequence spans 281 residues: Pseudouridine-5'-phosphate glycosidase (281 aa).

Glu-9 functions as the Proton donor in the catalytic mechanism. Residues Lys-69 and Val-89 each coordinate substrate. A Mn(2+)-binding site is contributed by Asp-118. Ser-120–Asp-122 lines the substrate pocket. Lys-139 functions as the Nucleophile in the catalytic mechanism.

This sequence belongs to the pseudouridine-5'-phosphate glycosidase family. In terms of assembly, homotrimer. It depends on Mn(2+) as a cofactor.

It carries out the reaction D-ribose 5-phosphate + uracil = psi-UMP + H2O. Its function is as follows. Catalyzes the reversible cleavage of pseudouridine 5'-phosphate (PsiMP) to ribose 5-phosphate and uracil. Functions biologically in the cleavage direction, as part of a pseudouridine degradation pathway. This chain is Pseudouridine-5'-phosphate glycosidase, found in Thermus thermophilus (strain ATCC BAA-163 / DSM 7039 / HB27).